A 361-amino-acid chain; its full sequence is Chorismate synthase (361 aa).

Residues arginine 48 and arginine 54 each coordinate NADP(+). FMN contacts are provided by residues 125 to 127 (RSS), 238 to 239 (NA), glycine 278, 293 to 297 (KPTSS), and arginine 319.

Belongs to the chorismate synthase family. As to quaternary structure, homotetramer. FMNH2 serves as cofactor.

It catalyses the reaction 5-O-(1-carboxyvinyl)-3-phosphoshikimate = chorismate + phosphate. Its pathway is metabolic intermediate biosynthesis; chorismate biosynthesis; chorismate from D-erythrose 4-phosphate and phosphoenolpyruvate: step 7/7. Functionally, catalyzes the anti-1,4-elimination of the C-3 phosphate and the C-6 proR hydrogen from 5-enolpyruvylshikimate-3-phosphate (EPSP) to yield chorismate, which is the branch point compound that serves as the starting substrate for the three terminal pathways of aromatic amino acid biosynthesis. This reaction introduces a second double bond into the aromatic ring system. The chain is Chorismate synthase from Vibrio parahaemolyticus serotype O3:K6 (strain RIMD 2210633).